Reading from the N-terminus, the 573-residue chain is Probable D-xylulose kinase A (573 aa).

Positions 100, 171, 287, and 288 each coordinate substrate. ATP contacts are provided by residues Trp368, 473–474, and Asn477; that span reads GG.

Belongs to the FGGY kinase family.

It localises to the cytoplasm. It catalyses the reaction D-xylulose + ATP = D-xylulose 5-phosphate + ADP + H(+). In terms of biological role, highly specific D-xylulose kinase which participates in the catabolism of xylose. Xylose is a major component of hemicelluloses such as xylan. Most fungi utilize D-xylose via three enzymatic reactions, xylose reductase (XR), xylitol dehydrogenase (XDH), and xylulokinase, to form xylulose 5-phosphate, which enters pentose phosphate pathway. The protein is Probable D-xylulose kinase A (xkiA) of Aspergillus terreus (strain NIH 2624 / FGSC A1156).